Consider the following 411-residue polypeptide: Carbamoyl phosphate synthase arginine-specific small chain (411 aa).

Positions 50, 232, and 234 each coordinate L-glutamine. Residues 185–376 form the Glutamine amidotransferase type-1 domain; the sequence is NVALIDCGVK…FDNIEKYQLQ (192 aa). Cys-264 functions as the Nucleophile in the catalytic mechanism. L-glutamine is bound by residues Leu-265, Gln-268, Asn-306, Gly-308, and Tyr-309. Active-site residues include His-349 and Glu-351.

This sequence belongs to the CarA family. In terms of assembly, heterodimer composed of 2 chains; the small (or glutamine) chain promotes the hydrolysis of glutamine to ammonia, which is used by the large (or ammonia) chain to synthesize carbamoyl phosphate.

It localises to the cytoplasm. The catalysed reaction is hydrogencarbonate + L-glutamine + 2 ATP + H2O = carbamoyl phosphate + L-glutamate + 2 ADP + phosphate + 2 H(+). It catalyses the reaction L-glutamine + H2O = L-glutamate + NH4(+). It participates in amino-acid biosynthesis; L-arginine biosynthesis; carbamoyl phosphate from bicarbonate: step 1/1. Small subunit of the arginine-specific carbamoyl phosphate synthase (CPSase). CPSase catalyzes the formation of carbamoyl phosphate from the ammonia moiety of glutamine, carbonate, and phosphate donated by ATP, constituting the first step of 2 biosynthetic pathways, one leading to arginine and/or urea and the other to pyrimidine nucleotides. The small subunit (glutamine amidotransferase) binds and cleaves glutamine to supply the large subunit with the substrate ammonia. The chain is Carbamoyl phosphate synthase arginine-specific small chain (CPA1) from Saccharomyces cerevisiae (strain ATCC 204508 / S288c) (Baker's yeast).